We begin with the raw amino-acid sequence, 360 residues long: MFEKGYVDENYIRVPKDRLFSFIVRVLTKLGVPEEDAKIVADNLVMADLRGVESHGVQRLKRYVDGIISGGVNLHPKIRVIREGPSYALIDGDEGLGQVVGYRSMKLAIKKAKDTGIGIVIARNSNHYGIAGYYALMAAEEGMIGISMTNSRPLVAPTGGIERILGTNPIALAAPTKDKPFLLDMATSVVPIGKLEVYRRKGKDIPEGWAINREGNITTKVEEVFNGGALLPLGGFGELLGGHKGYGLSLMVDILSGILSGGTWSKYVKNTSEKGSNVCHFFMVIDIEHFIPLEEFKEKISQMIEEIKSSRKHPEFERIWIHGEKGFLTMETRLKLGIPIYRKVLEELNEIAKRVGVEGL.

The protein belongs to the LDH2/MDH2 oxidoreductase family. As to quaternary structure, homodimer.

It is found in the cytoplasm. It carries out the reaction (S)-malate + NAD(+) = oxaloacetate + NADH + H(+). The sequence is that of Malate dehydrogenase (mdh) from Pyrococcus horikoshii (strain ATCC 700860 / DSM 12428 / JCM 9974 / NBRC 100139 / OT-3).